A 35-amino-acid chain; its full sequence is Coenzyme PQQ synthesis protein A (35 aa).

A cross-link (pyrroloquinoline quinone (Glu-Tyr)) is located at residues 16–20; that stretch reads EINMY.

Belongs to the PqqA family.

Its pathway is cofactor biosynthesis; pyrroloquinoline quinone biosynthesis. Its function is as follows. Required for coenzyme pyrroloquinoline quinone (PQQ) biosynthesis. PQQ is probably formed by cross-linking a specific glutamate to a specific tyrosine residue and excising these residues from the peptide. The chain is Coenzyme PQQ synthesis protein A from Ruegeria pomeroyi (strain ATCC 700808 / DSM 15171 / DSS-3) (Silicibacter pomeroyi).